The chain runs to 831 residues: Prolactin receptor (831 aa).

The first 23 residues, 1–23, serve as a signal peptide directing secretion; sequence MKQNLISSVQIILLLPLTTVGLT. Topologically, residues 24 to 438 are extracellular; the sequence is SQSFPGKPKI…EIPNDFRVKD (415 aa). Fibronectin type-III domains lie at 30–128, 129–232, 233–331, and 332–433; these read KPKI…VQPG, SPVN…SPPE, KPTI…VQPD, and PPAN…IPND. C36 and C46 are disulfide-bonded. N59 is a glycosylation site (N-linked (GlcNAc...) asparagine). Residues C75 and C86 are joined by a disulfide bond. 8 N-linked (GlcNAc...) asparagine glycosylation sites follow: N91, N100, N112, N132, N262, N303, N315, and N335. 2 residues coordinate Zn(2+): D414 and H416. The WSXWS motif signature appears at 419 to 423; it reads WSEWS. Residues 439 to 459 traverse the membrane as a helical segment; it reads MIVWIVLGVLSSLICLIMSWT. Topologically, residues 460-831 are cytoplasmic; sequence MVLKGYRMIT…DPSSFMPSFK (372 aa). Residues 471-479 carry the Box 1 motif motif; that stretch reads ILPPVPGPK. Disordered regions lie at residues 527 to 563 and 776 to 831; these read HQLM…SPSL and HTPT…PSFK. Positions 545–554 are enriched in basic and acidic residues; the sequence is TLKETDRDSG. Positions 777 to 803 are enriched in polar residues; sequence TPTSQEEPAKETSQNPQQGQVETNMSY.

Belongs to the type I cytokine receptor family. Type 1 subfamily.

It localises to the membrane. Its function is as follows. This is a receptor for the anterior pituitary hormone prolactin. The protein is Prolactin receptor (PRLR) of Meleagris gallopavo (Wild turkey).